We begin with the raw amino-acid sequence, 269 residues long: MWPSLSNELFPPPTEVWLQTVSSDPEAQGWGAWGRTEKTSLVPSAGSDKEAEENEDSSFLLSLLEPENLAKSPVYNQELEAIRLKLWTMEHAEVLPEPPSVQRKATEEERAEARELLSPETIGCFFPGAPKENVEADHRSVYVGNVDYGGSAAELEAYFSPCGEIHRVTILCDKFSGHPKGYAYIEFASKSSVQAAVRLDESTFRGRVIKVLPKRTNFPGISSTDRGGLRTHSSSRAAFLQGSLQRKPRLRPHGQSRGRGRASPWFSPY.

The tract at residues 26-54 (EAQGWGAWGRTEKTSLVPSAGSDKEAEEN) is disordered. One can recognise an RRM domain in the interval 139-216 (RSVYVGNVDY…RVIKVLPKRT (78 aa)). The disordered stretch occupies residues 240–269 (LQGSLQRKPRLRPHGQSRGRGRASPWFSPY). Residues 246–260 (RKPRLRPHGQSRGRG) show a composition bias toward basic residues.

It is found in the cytoplasm. In terms of biological role, binds the poly(A) tail of mRNA. The polypeptide is Embryonic polyadenylate-binding protein 2 (Pabpn1l) (Rattus norvegicus (Rat)).